We begin with the raw amino-acid sequence, 1091 residues long: Sodium/potassium exporting P-type ATPase 2 (1091 aa).

Residues Met-1–Lys-63 are Cytoplasmic-facing. Residues Ala-64–Ile-84 form a helical membrane-spanning segment. The Extracellular portion of the chain corresponds to Ser-85–Asp-90. The chain crosses the membrane as a helical span at residues Trp-91–Gln-111. Residues Glu-112–Lys-282 lie on the Cytoplasmic side of the membrane. A helical membrane pass occupies residues Leu-283–Ala-303. Residues Ser-304–Arg-312 are Extracellular-facing. The helical transmembrane segment at Val-313 to Leu-333 threads the bilayer. The Cytoplasmic segment spans residues Thr-334 to Phe-815. Catalysis depends on Asp-369, which acts as the 4-aspartylphosphate intermediate. Mg(2+)-binding residues include Asp-369 and Thr-371. Thr-371 and Glu-483 together coordinate ATP. Residues Ala-499–Gly-525 form a disordered region. Positions Glu-503–Gln-519 are enriched in polar residues. ATP contacts are provided by Lys-561, Arg-606, Thr-673, Gly-674, Asp-675, Arg-732, and Lys-738. Residue Asp-757 participates in Mg(2+) binding. Asn-760 provides a ligand contact to ATP. The chain crosses the membrane as a helical span at residues Val-816–Phe-836. At Arg-837–Ser-848 the chain is on the extracellular side. A helical transmembrane segment spans residues Pro-849 to Leu-869. At Glu-870 to Glu-885 the chain is on the cytoplasmic side. The helical transmembrane segment at Val-886–Gly-906 threads the bilayer. The Extracellular segment spans residues Ser-907–Arg-943. A helical membrane pass occupies residues Ser-944 to Met-964. Over Arg-965–Phe-991 the chain is Cytoplasmic. A helical membrane pass occupies residues Leu-992 to Ile-1012. Residues Asn-1013–Pro-1021 lie on the Extracellular side of the membrane. A helical membrane pass occupies residues Ile-1022–Leu-1042. The Cytoplasmic portion of the chain corresponds to Tyr-1043 to Gln-1091.

It belongs to the cation transport ATPase (P-type) (TC 3.A.3) family. Type IID subfamily. The cofactor is Mg(2+). The active site is phosphorylated in presence of sodium or potassium and in conditions of higher pH. Not phosphorylated in presence of calcium ions.

The protein localises to the cell membrane. It carries out the reaction Na(+)(in) + ATP + H2O = Na(+)(out) + ADP + phosphate + H(+). The catalysed reaction is K(+)(in) + ATP + H2O = K(+)(out) + ADP + phosphate + H(+). In terms of biological role, catalyzes the hydrolysis of ATP coupled with the export of sodium and potassium from the cell. May export potassium less efficiently. May transport other cations such as lithium. Sodium/potassium efflux ATPases are involved in salt tolerance and maintaining the membrane potential across the plasma membrane in high salinity (Na+) or alkaline (K+) environments. This is Sodium/potassium exporting P-type ATPase 2 from Saccharomyces cerevisiae (strain ATCC 204508 / S288c) (Baker's yeast).